We begin with the raw amino-acid sequence, 100 residues long: Large ribosomal subunit protein uL23 (100 aa).

The protein belongs to the universal ribosomal protein uL23 family. In terms of assembly, part of the 50S ribosomal subunit. Contacts protein L29, and trigger factor when it is bound to the ribosome.

One of the early assembly proteins it binds 23S rRNA. One of the proteins that surrounds the polypeptide exit tunnel on the outside of the ribosome. Forms the main docking site for trigger factor binding to the ribosome. The chain is Large ribosomal subunit protein uL23 from Pasteurella multocida (strain Pm70).